The sequence spans 344 residues: MASSDFDGILLGMGNPLLDVSAVVDQQFLDKYDIKLNNAILAEDKHLPMYDEMSQKFNVEYIAGGATQNSIKVAQWMLQVPGATSYMGSIGKDKYGEAMKKDATAAGVYVHYYEDEATPTGTCGVCVLGGERSLIANLSAANCYKVEHLKKPENWALVEKAKFYYIAGFFLTVSPESIQLVREHAAANNKVFTMNLSAPFICEFFKDVQEKCLPYMDYIFGNETEARTFSRVHGWETDDVEQIAIKMSQLPKASGTYKRTTVITQGADPVVVAEDGKVKKYPVIPLPKEKLVDTNGAGDAFVGGFLSQLVHGKGIEECVRAGCYASNVVIQRSGCTYPEKPDFN.

The active site involves Asp-299.

Belongs to the carbohydrate kinase PfkB family. As to quaternary structure, interacts with the begomovirus AL2 protein and the curtovirus L2 protein. Requires Mg(2+) as cofactor. As to expression, widely expressed.

It carries out the reaction adenosine + ATP = AMP + ADP + H(+). The protein operates within purine metabolism; AMP biosynthesis via salvage pathway; AMP from adenosine: step 1/1. With respect to regulation, inactivated by the begomovirus AL2 protein or the curtovirus L2 protein. Functionally, ATP dependent phosphorylation of adenosine and other related nucleoside analogs to monophosphate derivatives. Essential to sustain methyl recycling. The protein is Adenosine kinase 1 of Arabidopsis thaliana (Mouse-ear cress).